Reading from the N-terminus, the 32-residue chain is Putative leucine-rich repeat protein PS14 (32 aa).

The sequence is that of Putative leucine-rich repeat protein PS14 from Pinus strobus (Eastern white pine).